The following is a 560-amino-acid chain: Nibrin homolog (560 aa).

Residues 25–87 (YKVGRKDCDV…YGTFFNKVQG (63 aa)) form the FHA domain. In terms of domain architecture, BRCT spans 115–190 (TFRLSFVPIV…KQIVLGDWFK (76 aa)). A Nuclear localization signal motif is present at residues 511–518 (YKRGTVID).

The protein belongs to the Nibrin family. As to quaternary structure, component of the MRN complex composed of two heterodimers RAD50 and MRE11 associated with a single NBS1.

It localises to the nucleus. The protein resides in the chromosome. Functionally, component of the MRN complex, which plays a central role in double-strand break (DSB) repair, DNA recombination, maintenance of telomere integrity and meiosis. The MRN complex is involved in the repair of DNA double-strand breaks (DSBs) via homologous recombination (HR), an error-free mechanism which primarily occurs during S and G2 phases. The complex (1) mediates the end resection of damaged DNA, which generates proper single-stranded DNA, a key initial steps in HR, and is (2) required for the recruitment of other repair factors and efficient activation of ATM and ATR upon DNA damage. The MRN complex possesses single-strand endonuclease activity and double-strand-specific 3'-5' exonuclease activity, which are provided by MRE11, to initiate end resection, which is required for single-strand invasion and recombination. Within the MRN complex, NBS1 acts as a protein-protein adapter, which specifically recognizes and binds phosphorylated proteins, promoting their recruitment to DNA damage sites. Recruits MRE11 and RAD50 components of the MRN complex to DSBs in response to DNA damage. This Oryza sativa subsp. indica (Rice) protein is Nibrin homolog.